The primary structure comprises 293 residues: Protease HtpX (293 aa).

2 helical membrane passes run 4-24 (IALFLLTNLAVMLVFGLVLSL) and 34-54 (GLMIMAGLFGFGGAFVSLLMS). His139 contributes to the Zn(2+) binding site. Glu140 is a catalytic residue. His143 contributes to the Zn(2+) binding site. 2 consecutive transmembrane segments (helical) span residues 158–178 (VVNTFVIFISRLIAQIAAGFL) and 193–213 (MVYFAVSMVLELVFGILASII). Glu222 contacts Zn(2+).

The protein belongs to the peptidase M48B family. The cofactor is Zn(2+).

The protein resides in the cell inner membrane. This is Protease HtpX from Yersinia pseudotuberculosis serotype O:1b (strain IP 31758).